A 622-amino-acid polypeptide reads, in one-letter code: Intermediate filament protein ifc-2 (622 aa).

The tract at residues 19 to 54 (SGTYASGFGQLVSGMSSAGAICTTQIRDAREREKRE) is head. The 349-residue stretch at 51-399 (EKREIGLLND…ILLNGANVTT (349 aa)) folds into the IF rod domain. Residues 55 to 86 (IGLLNDRLADYIEKVRFLEAQNRCLSHDIDIL) form a coil 1A region. A linker 1 region spans residues 87 to 99 (RNGFSGGGHVSGL). Positions 100–237 (FDAEINQAKH…TENNVRIEQE (138 aa)) are coil 1B. A linker 12 region spans residues 238-255 (LVFIRRDTTADNRDYFRH). Residues 256–399 (ELQAAIRDIR…ILLNGANVTT (144 aa)) are coil 2. Positions 400 to 550 (YTSNTHGSGS…RVDVGGFRIE (151 aa)) are tail. Positions 509–622 (SGRHFHSWYL…EERAWFVYLD (114 aa)) constitute an LTD domain.

Belongs to the intermediate filament family. Expressed in intestinal cells and at desmosomes in intestine and pharynx of the larva.

The protein resides in the cytoplasm. Its function is as follows. Cytoplasmic intermediate filaments provide mechanical strength to cells. Not essential protein, although its absence leads to mild defects in locomotion. This is Intermediate filament protein ifc-2 (ifc-2) from Caenorhabditis elegans.